We begin with the raw amino-acid sequence, 1321 residues long: Bile salt export pump (1321 aa).

Topologically, residues 1–62 (MSDSVILRSI…FSSSTDIWLM (62 aa)) are cytoplasmic. The segment at 16–37 (ENDGFESDKSYNNDKKSRLQDE) is disordered. The segment covering 21–37 (ESDKSYNNDKKSRLQDE) has biased composition (basic and acidic residues). The ABC transmembrane type-1 1 domain maps to 62–385 (MFVGSLCAFL…ASPCLEAFAT (324 aa)). Residues 63-83 (FVGSLCAFLHGIAQPGVLLIF) form a helical membrane-spanning segment. The Extracellular portion of the chain corresponds to 84–147 (GTMTDVFIDY…MIKFASYYAG (64 aa)). N-linked (GlcNAc...) asparagine glycans are attached at residues Asn109, Asn116, Asn122, and Asn125. The helical transmembrane segment at 148–168 (IAVAVLITGYIQICFWVIAAA) threads the bilayer. Over 169–215 (RQIQKMRKFYFRRIMRMEIGWFDCNSVGELNTRFSDDINKINDAIAD) the chain is Cytoplasmic. A helical transmembrane segment spans residues 216-236 (QMALFIQRMTSTICGFLLGFF). Residues 237-240 (RGWK) lie on the Extracellular side of the membrane. A helical transmembrane segment spans residues 241–261 (LTLVIISVSPLIGIGAATIGL). At 262–319 (SVSKFTDYELKAYAKAGVVADEVISSMRTVAAFGGEKREVERYEKNLVFAQRWGIRKG) the chain is on the cytoplasmic side. The chain crosses the membrane as a helical span at residues 320 to 340 (IVMGFFTGFVWCLIFLCYALA). Residues 341 to 353 (FWYGSTLVLDEGE) lie on the Extracellular side of the membrane. Residues 354–374 (YTPGTLVQIFLSVIVGALNLG) traverse the membrane as a helical segment. Over 375 to 755 (NASPCLEAFA…KFSAPEWPYM (381 aa)) the chain is Cytoplasmic. The ABC transporter 1 domain maps to 420 to 656 (IEFHNVTFHY…KGVYFTLVTL (237 aa)). ATP is bound at residue 455 to 462 (GPSGAGKS). Phosphothreonine is present on Thr586. Ser587 carries the post-translational modification Phosphoserine. Positions 651 to 672 (FTLVTLQSQGNQALNEEDIKDA) are interaction with HAX1. A phosphoserine mark is found at Ser690, Ser701, and Ser704. The ABC transmembrane type-1 2 domain maps to 755–1043 (MLVGSVGAAV…AFSYTPSYAK (289 aa)). A helical membrane pass occupies residues 756–776 (LVGSVGAAVNGTVTPLYAFLF). The Extracellular segment spans residues 777–794 (SQILGTFSIPDKEEQRSQ). The helical transmembrane segment at 795–815 (INGVCLLFVAMGCVSLFTQFL) threads the bilayer. Topologically, residues 816–869 (QGYAFAKSGELLTKRLRKFGFRAMLGQDIAWFDDLRNSPGALTTRLATDASQVQ) are cytoplasmic. 2 helical membrane passes run 870–890 (GAAG…TVAM) and 891–911 (IIAF…FPFL). Residues 912-979 (ALSGATQTRM…PFKTAIQKAN (68 aa)) are Cytoplasmic-facing. A helical transmembrane segment spans residues 980–1000 (IYGFCFAFAQCIMFIANSASY). Over 1001–1011 (RYGGYLISNEG) the chain is Extracellular. A helical membrane pass occupies residues 1012–1032 (LHFSYVFRVISAVVLSATALG). At 1033–1321 (RAFSYTPSYA…KLVTTGSPIS (289 aa)) the chain is on the cytoplasmic side. An ABC transporter 2 domain is found at 1078–1316 (IDFVDCKFTY…KGAYYKLVTT (239 aa)). 1113-1120 (GSSGCGKS) is an ATP binding site. At Ser1214 the chain carries Phosphoserine. Residues 1311-1314 (YKLV) form a mediates internalization from the plasma membrane region. Phosphoserine is present on Ser1321.

Belongs to the ABC transporter superfamily. ABCB family. Multidrug resistance exporter (TC 3.A.1.201) subfamily. In terms of assembly, interacts with HAX1. Interacts with the adapter protein complex 2 (AP-2) throught AP2A2 or AP2A1; this interaction regulates cell membrane expression of ABCB11 through its internalization in a clathrin-dependent manner and its subsequent degradation. Post-translationally, N-glycosylated. Ubiquitinated; short-chain ubiquitination regulates cell-Surface expression of ABCB11. In terms of tissue distribution, expressed predominantly, if not exclusively in the liver, where it was further localized to the canalicular microvilli and to subcanalicular vesicles of the hepatocytes by in situ.

It localises to the apical cell membrane. The protein localises to the recycling endosome membrane. The protein resides in the endosome. Its subcellular location is the cell membrane. It catalyses the reaction cholate(in) + ATP + H2O = cholate(out) + ADP + phosphate + H(+). It carries out the reaction taurocholate(in) + ATP + H2O = taurocholate(out) + ADP + phosphate + H(+). The enzyme catalyses glycocholate(in) + ATP + H2O = glycocholate(out) + ADP + phosphate + H(+). The catalysed reaction is glycochenodeoxycholate(in) + ATP + H2O = glycochenodeoxycholate(out) + ADP + phosphate + H(+). It catalyses the reaction taurochenodeoxycholate(in) + ATP + H2O = taurochenodeoxycholate(out) + ADP + phosphate + H(+). It carries out the reaction glycoursodeoxycholate(in) + ATP + H2O = glycoursodeoxycholate(out) + ADP + phosphate + H(+). The enzyme catalyses tauroursodeoxycholate(in) + ATP + H2O = tauroursodeoxycholate(out) + ADP + phosphate + H(+). The catalysed reaction is taurodeoxycholate(in) + ATP + H2O = taurodeoxycholate(out) + ADP + phosphate + H(+). It catalyses the reaction taurolithocholate 3-sulfate(in) + ATP + H2O = taurolithocholate 3-sulfate(out) + ADP + phosphate + H(+). It carries out the reaction pravastatin(in) + ATP + H2O = pravastatin(out) + ADP + phosphate + H(+). The uptake of taurocholate is inhibited by taurolithocholate sulfate with an IC(50) of 9 uM. Pravastatin competitively inhibits the transport of taurocholic acid. Cyclosporin A, glibenclamide, rifampicin and troglitazonestrongly competitively inhibit the transport activity of taurocholate. The canalicular transport activity of taurocholate is strongly dependent on canalicular membrane cholesterol content. The uptake of taurocholate is increased by short- and medium-chain fatty acids. Cholesterol increases transport capacity of taurocholate without affecting the affinity for the substrate. Catalyzes the transport of the major hydrophobic bile salts, such as taurine and glycine-conjugated cholic acid across the canalicular membrane of hepatocytes in an ATP-dependent manner, therefore participates in hepatic bile acid homeostasis and consequently to lipid homeostasis through regulation of biliary lipid secretion in a bile salts dependent manner. Transports taurine-conjugated bile salts more rapidly than glycine-conjugated bile salts. Also transports non-bile acid compounds, such as pravastatin and fexofenadine in an ATP-dependent manner and may be involved in their biliary excretion. This is Bile salt export pump from Homo sapiens (Human).